A 417-amino-acid polypeptide reads, in one-letter code: Tol-Pal system protein TolB (417 aa).

Residues 1–16 (MRYLWLFLIGTIGLFA) form the signal peptide.

Belongs to the TolB family. In terms of assembly, the Tol-Pal system is composed of five core proteins: the inner membrane proteins TolA, TolQ and TolR, the periplasmic protein TolB and the outer membrane protein Pal. They form a network linking the inner and outer membranes and the peptidoglycan layer.

The protein resides in the periplasm. Its function is as follows. Part of the Tol-Pal system, which plays a role in outer membrane invagination during cell division and is important for maintaining outer membrane integrity. The polypeptide is Tol-Pal system protein TolB (Helicobacter pylori (strain HPAG1)).